A 503-amino-acid polypeptide reads, in one-letter code: T-complex protein 11 homolog (503 aa).

The span at 1-22 (MPDVKESVPPKYPGDSEGRSCK) shows a compositional bias: basic and acidic residues. Disordered regions lie at residues 1 to 42 (MPDV…PPPF) and 254 to 285 (DLTMSPPTCPDTSDSSSVAGPSPNEAANNPEP). Over residues 263-285 (PDTSDSSSVAGPSPNEAANNPEP) the composition is skewed to low complexity. The chain crosses the membrane as a helical span at residues 330–349 (LTVMASVLLVASSFSGSVLF).

This sequence belongs to the TCP11 family. As to quaternary structure, found in a complex at least composed of MROH2B, PRKACA isoform 2 and TCP11. Interacts with MROH2B. Interacts with PRKACA isoform 2. Isoform 2 and isoform 3 interact with ODF1 (via leucine zipper motif). Post-translationally, constitutively phosphorylated on serine, threonine and tyrosine residues within the head and tail regions of noncapacitated spermatozoa. Phosphorylation on tyrosine residues increases upon sperm capacitation within the acrosomal region in a protein kinase A (PKA)-dependent signaling pathway. In terms of tissue distribution, isoform 2 and isoform 3 are expressed in sperm. Isoform 1 is not detected in sperm (at protein level). Testis-specific. Isoform 1, isoform 2 and isoform 3 are expressed in sperm.

The protein resides in the membrane. The protein localises to the cell projection. Its subcellular location is the cilium. It localises to the flagellum. It is found in the cytoplasmic vesicle. The protein resides in the secretory vesicle. The protein localises to the acrosome. Functionally, plays a role in the process of sperm capacitation and acrosome reactions. Probable receptor for the putative fertilization-promoting peptide (FPP) at the sperm membrane that may modulate the activity of the adenylyl cyclase cAMP pathway. This is T-complex protein 11 homolog (TCP11) from Homo sapiens (Human).